A 143-amino-acid polypeptide reads, in one-letter code: Large ribosomal subunit protein uL13 (143 aa).

It belongs to the universal ribosomal protein uL13 family. As to quaternary structure, part of the 50S ribosomal subunit.

Functionally, this protein is one of the early assembly proteins of the 50S ribosomal subunit, although it is not seen to bind rRNA by itself. It is important during the early stages of 50S assembly. This is Large ribosomal subunit protein uL13 from Rubrobacter xylanophilus (strain DSM 9941 / JCM 11954 / NBRC 16129 / PRD-1).